A 498-amino-acid chain; its full sequence is O-methyltransferase OME1 (498 aa).

The span at 1–19 shows a compositional bias: polar residues; sequence MSTMALHRTASTKSDTTMA. Disordered regions lie at residues 1-23 and 42-83; these read MSTMALHRTASTKSDTTMACPNG and HRAE…QPEY. Residues 50–65 are compositionally biased toward low complexity; that stretch reads SSTSSVSTTPTSPSFS. D358 provides a ligand contact to S-adenosyl-L-methionine. H406 acts as the Proton acceptor in catalysis.

Belongs to the class I-like SAM-binding methyltransferase superfamily. Cation-independent O-methyltransferase family.

The protein operates within secondary metabolite biosynthesis. Its function is as follows. O-methyltransferase; part of the gene cluster that mediates the biosynthesis of a tyrosine-derived cytochalasan acting as a fungal signal recognized by resistant rice plants and leads to avirulence in Pi33 resistant rice cultivars. The first step in the pathway is catalyzed by the hybrid PKS-NRPS ACE1, assisted by the enoyl reductase RAP1, that are responsible for fusion of the tyrosine precursor and the polyketide backbone. The polyketide synthase module (PKS) of ACE1 is responsible for the synthesis of the polyketide backbone and the downstream nonribosomal peptide synthetase (NRPS) amidates the carboxyl end of the polyketide with the tyrosine precursor. Because ACE1 lacks a designated enoylreductase (ER) domain, the required activity is provided the enoyl reductase RAP1. Reduction by the hydrolyase ORFZ, followed by dehydration and intra-molecular Diels-Alder cyclization by the Diels-Alderase ORF3 then yield the required isoindolone-fused macrocycle. A number of oxidative steps catalyzed by the tailoring enzymes identified within the cluster, including cytochrome P450 monooxygenases CYP1 to CYP4, the FAD-linked oxidoreductase OXR2 and the short-chain dehydrogenase/reductase OXR1, are further required to afford the final cytochalasans that confer avirulence and which have still to be identified. The monooxygenase CYP1 has been shown to be a site-selective C-18 hydroxylase whereas the function of CYP3 is the site-selective epoxidation of the C-6/C-7 olefin that is present in some intermediate compounds. Finally, SYN2 and RAP2 are not required for avirulence in Pi33 resistant rice cultivars. This is O-methyltransferase OME1 from Pyricularia oryzae (strain 70-15 / ATCC MYA-4617 / FGSC 8958) (Rice blast fungus).